Here is a 321-residue protein sequence, read N- to C-terminus: L-carnitine dehydrogenase (321 aa).

7 to 12 (GTGVIG) provides a ligand contact to NAD(+).

Belongs to the 3-hydroxyacyl-CoA dehydrogenase family. L-carnitine dehydrogenase subfamily. In terms of assembly, homodimer.

The protein localises to the cytoplasm. The catalysed reaction is carnitine + NAD(+) = 3-dehydrocarnitine + NADH + H(+). Its pathway is amine and polyamine metabolism; carnitine metabolism. Its function is as follows. Catalyzes the NAD(+)-dependent oxidation of L-carnitine to 3-dehydrocarnitine. This is L-carnitine dehydrogenase from Staphylococcus epidermidis (strain ATCC 12228 / FDA PCI 1200).